The chain runs to 99 residues: RNA-binding protein Hfq (99 aa).

The Sm domain maps to 9 to 68; that stretch reads DPFLNALRRERVPVSIYLVNGIKLQGQIESFDQFVILLKNTVSQMVYKHAISTVVPSRPV. The segment at 64–99 is disordered; sequence PSRPVSHHSNNPGGSNNYHGSNTTAQQQSQDADDAE. Residues 70-93 are compositionally biased toward low complexity; the sequence is HHSNNPGGSNNYHGSNTTAQQQSQ.

Belongs to the Hfq family. Homohexamer.

Its function is as follows. RNA chaperone that binds small regulatory RNA (sRNAs) and mRNAs to facilitate mRNA translational regulation in response to envelope stress, environmental stress and changes in metabolite concentrations. Also binds with high specificity to tRNAs. The chain is RNA-binding protein Hfq from Pectobacterium atrosepticum (strain SCRI 1043 / ATCC BAA-672) (Erwinia carotovora subsp. atroseptica).